Consider the following 25-residue polypeptide: M-poneritoxin-Ng1a (25 aa).

As to expression, expressed by the venom gland.

It localises to the secreted. It is found in the target cell membrane. Its function is as follows. Has a broad spectrum of activity against both Gram-positive and Gram-negative bacteria and S.cerevisiae. Has insecticidal and hemolytic activities. May act by disrupting the integrity of the bacterial cell membrane. In Neoponera goeldii (Ponerine ant), this protein is M-poneritoxin-Ng1a.